A 60-amino-acid polypeptide reads, in one-letter code: Acrosin (60 aa).

Asparagine 3 carries N-linked (GlcNAc...) asparagine glycosylation. The Peptidase S1 domain occupies 24-60; the sequence is IIGGQDAAHGSWPWMVSLQIFTYHNNRRYHVCGGSLL.

The protein belongs to the peptidase S1 family. As to quaternary structure, heavy chain (catalytic) and a light chain linked by two disulfide bonds. Forms a heterodimer with SERPINA5.

It catalyses the reaction Preferential cleavage: Arg-|-Xaa, Lys-|-Xaa.. Its activity is regulated as follows. Inhibited by SERPINA5. Acrosin is the major protease of mammalian spermatozoa. It is a serine protease of trypsin-like cleavage specificity, it is synthesized in a zymogen form, proacrosin and stored in the acrosome. The polypeptide is Acrosin (ACR) (Capra hircus (Goat)).